The primary structure comprises 127 residues: Aspartate 1-decarboxylase (127 aa).

The Schiff-base intermediate with substrate; via pyruvic acid role is filled by Ser25. Ser25 is modified (pyruvic acid (Ser)). A substrate-binding site is contributed by Thr57. The active-site Proton donor is Tyr58. A substrate-binding site is contributed by 73–75; it reads GAA.

The protein belongs to the PanD family. Heterooctamer of four alpha and four beta subunits. Pyruvate is required as a cofactor. In terms of processing, is synthesized initially as an inactive proenzyme, which is activated by self-cleavage at a specific serine bond to produce a beta-subunit with a hydroxyl group at its C-terminus and an alpha-subunit with a pyruvoyl group at its N-terminus.

Its subcellular location is the cytoplasm. The enzyme catalyses L-aspartate + H(+) = beta-alanine + CO2. It functions in the pathway cofactor biosynthesis; (R)-pantothenate biosynthesis; beta-alanine from L-aspartate: step 1/1. Catalyzes the pyruvoyl-dependent decarboxylation of aspartate to produce beta-alanine. This Bacillus cereus (strain 03BB102) protein is Aspartate 1-decarboxylase.